Consider the following 460-residue polypeptide: A-type ATP synthase subunit B (460 aa).

It belongs to the ATPase alpha/beta chains family. Has multiple subunits, A(3), B(3), C, D, E, F, G, I and K(x); there may be a few other subunits as well.

Its subcellular location is the cell membrane. In terms of biological role, component of the A-type ATP synthase that produces ATP from ADP in the presence of a proton gradient across the membrane. The B chain is a regulatory subunit. The sequence is that of A-type ATP synthase subunit B from Methanosarcina mazei (strain ATCC BAA-159 / DSM 3647 / Goe1 / Go1 / JCM 11833 / OCM 88) (Methanosarcina frisia).